Here is a 591-residue protein sequence, read N- to C-terminus: Inactive metallocarboxypeptidase ECM14 (591 aa).

Residues 1–21 (MRLFAHLAVLAILACAVPITA) form the signal peptide. A propeptide spanning residues 22-175 (IPSFLSNSYP…QTIYESYPSS (154 aa)) is cleaved from the precursor. A Peptidase M14 domain is found at 203–523 (DYQPFSVIVP…NAVMVLGRFL (321 aa)). Residues H265 and E268 each coordinate Zn(2+). Substrate-binding positions include 265–268 (HARE), R323, and 340–341 (DR). The cysteines at positions 334 and 357 are disulfide-linked. 3 N-linked (GlcNAc...) asparagine glycosylation sites follow: N350, N381, and N386. H397 is a Zn(2+) binding site. 398-399 (SY) lines the substrate pocket. Residues 533-591 (DWEDESQRPKAGEDDIPSDNELDENDDSWIPYDYRNHDDQNEGEGYDNDEWGFRRRRKR) are disordered. Acidic residues-rich tracts occupy residues 546–559 (DDIP…ENDD) and 573–582 (NEGEGYDNDE).

The protein belongs to the peptidase M14 family. It depends on Zn(2+) as a cofactor.

Its subcellular location is the vacuole. It is found in the secreted. In terms of biological role, inactive carboxypeptidase that may play a role in cell wall organization and biogenesis. This Paracoccidioides brasiliensis (strain Pb03) protein is Inactive metallocarboxypeptidase ECM14 (ECM14).